Here is a 338-residue protein sequence, read N- to C-terminus: Glycerol-3-phosphate dehydrogenase [NAD(P)+] (338 aa).

3 residues coordinate NADPH: Ser13, Trp14, and Lys108. 3 residues coordinate sn-glycerol 3-phosphate: Lys108, Gly139, and Ser141. An NADPH-binding site is contributed by Ala143. The sn-glycerol 3-phosphate site is built by Lys194, Asp247, Ser257, Arg258, and Asn259. The active-site Proton acceptor is Lys194. Arg258 serves as a coordination point for NADPH. Val282 and Glu284 together coordinate NADPH.

Belongs to the NAD-dependent glycerol-3-phosphate dehydrogenase family.

It is found in the cytoplasm. It carries out the reaction sn-glycerol 3-phosphate + NAD(+) = dihydroxyacetone phosphate + NADH + H(+). The catalysed reaction is sn-glycerol 3-phosphate + NADP(+) = dihydroxyacetone phosphate + NADPH + H(+). Its pathway is membrane lipid metabolism; glycerophospholipid metabolism. Catalyzes the reduction of the glycolytic intermediate dihydroxyacetone phosphate (DHAP) to sn-glycerol 3-phosphate (G3P), the key precursor for phospholipid synthesis. In Streptococcus pneumoniae (strain JJA), this protein is Glycerol-3-phosphate dehydrogenase [NAD(P)+].